The following is a 295-amino-acid chain: Septu protein PtuB (295 aa).

Its function is as follows. Component of antiviral defense system Septu type II, composed of PtuA and PtuB. Expression of Septu type II in B.subtilis (strain BEST7003) confers resistance to phages SBSphiC and SpBeta. May be a nuclease. In Bacillus mycoides (strain KBAB4) (Bacillus weihenstephanensis), this protein is Septu protein PtuB.